Consider the following 154-residue polypeptide: Myoglobin (154 aa).

One can recognise a Globin domain in the interval Gly-2–Lys-148. Ser-4 carries the post-translational modification Phosphoserine. His-65 contacts nitrite. His-65 is an O2 binding site. Thr-68 carries the post-translational modification Phosphothreonine. Residue His-94 participates in heme b binding.

It belongs to the globin family. As to quaternary structure, monomeric.

It localises to the cytoplasm. The protein resides in the sarcoplasm. It catalyses the reaction Fe(III)-heme b-[protein] + nitric oxide + H2O = Fe(II)-heme b-[protein] + nitrite + 2 H(+). It carries out the reaction H2O2 + AH2 = A + 2 H2O. In terms of biological role, monomeric heme protein which primary function is to store oxygen and facilitate its diffusion within muscle tissues. Reversibly binds oxygen through a pentacoordinated heme iron and enables its timely and efficient release as needed during periods of heightened demand. Depending on the oxidative conditions of tissues and cells, and in addition to its ability to bind oxygen, it also has a nitrite reductase activity whereby it regulates the production of bioactive nitric oxide. Under stress conditions, like hypoxia and anoxia, it also protects cells against reactive oxygen species thanks to its pseudoperoxidase activity. In Otolemur crassicaudatus (Brown greater galago), this protein is Myoglobin (MB).